A 431-amino-acid polypeptide reads, in one-letter code: Aspartate--tRNA(Asp/Asn) ligase (431 aa).

E170 serves as a coordination point for L-aspartate. Residues 192–195 form an aspartate region; that stretch reads QLYK. An L-aspartate-binding site is contributed by R214. Residues 214–216, 222–224, and E354 contribute to the ATP site; these read RAE and RHL. Mg(2+) is bound by residues E354 and S357. 2 residues coordinate L-aspartate: S357 and R361. 402-405 provides a ligand contact to ATP; the sequence is GLER.

Belongs to the class-II aminoacyl-tRNA synthetase family. Type 2 subfamily. Homodimer. It depends on Mg(2+) as a cofactor.

Its subcellular location is the cytoplasm. It carries out the reaction tRNA(Asx) + L-aspartate + ATP = L-aspartyl-tRNA(Asx) + AMP + diphosphate. Functionally, aspartyl-tRNA synthetase with relaxed tRNA specificity since it is able to aspartylate not only its cognate tRNA(Asp) but also tRNA(Asn). Reaction proceeds in two steps: L-aspartate is first activated by ATP to form Asp-AMP and then transferred to the acceptor end of tRNA(Asp/Asn). This is Aspartate--tRNA(Asp/Asn) ligase from Methanopyrus kandleri (strain AV19 / DSM 6324 / JCM 9639 / NBRC 100938).